We begin with the raw amino-acid sequence, 301 residues long: Dimethylsulfoniopropionate lyase (301 aa).

Residues C111 and C230 each act as proton donor/acceptor in the active site.

It belongs to the aspartate/glutamate racemases family. ALMA1 subfamily. As to quaternary structure, homotetramer.

It carries out the reaction S,S-dimethyl-beta-propiothetin = acrylate + dimethyl sulfide + H(+). Mediates cleavage of dimethylsulfoniopropionate (DMSP) into dimethyl sulfide (DMS) and acrylate. DMS is the principal form by which sulfur is transported from oceans to the atmosphere and is a key component of the ocean sulfur cycle. This Durusdinium sp. clade D (Symbiodinium sp. clade D) protein is Dimethylsulfoniopropionate lyase.